A 420-amino-acid polypeptide reads, in one-letter code: Riboflavin biosynthesis protein RibBA (420 aa).

The interval M1 to R202 is DHBP synthase. Residues R28–E29, D33, R141–T145, and E165 contribute to the D-ribulose 5-phosphate site. Residue E29 participates in Mg(2+) binding. H144 contacts Mg(2+). The interval T203–A420 is GTP cyclohydrolase II. R253–E257 serves as a coordination point for GTP. Zn(2+) contacts are provided by C258, C269, and C271. Residues Q274, E297–R299, and T319 each bind GTP. D331 acts as the Proton acceptor; for GTP cyclohydrolase activity in catalysis. The Nucleophile; for GTP cyclohydrolase activity role is filled by R333. T354 and K359 together coordinate GTP.

The protein in the N-terminal section; belongs to the DHBP synthase family. It in the C-terminal section; belongs to the GTP cyclohydrolase II family. Mg(2+) is required as a cofactor. Mn(2+) serves as cofactor. It depends on Zn(2+) as a cofactor.

It catalyses the reaction D-ribulose 5-phosphate = (2S)-2-hydroxy-3-oxobutyl phosphate + formate + H(+). The enzyme catalyses GTP + 4 H2O = 2,5-diamino-6-hydroxy-4-(5-phosphoribosylamino)-pyrimidine + formate + 2 phosphate + 3 H(+). The protein operates within cofactor biosynthesis; riboflavin biosynthesis; 2-hydroxy-3-oxobutyl phosphate from D-ribulose 5-phosphate: step 1/1. Its pathway is cofactor biosynthesis; riboflavin biosynthesis; 5-amino-6-(D-ribitylamino)uracil from GTP: step 1/4. Functionally, catalyzes the conversion of D-ribulose 5-phosphate to formate and 3,4-dihydroxy-2-butanone 4-phosphate. In terms of biological role, catalyzes the conversion of GTP to 2,5-diamino-6-ribosylamino-4(3H)-pyrimidinone 5'-phosphate (DARP), formate and pyrophosphate. In Salinispora arenicola (strain CNS-205), this protein is Riboflavin biosynthesis protein RibBA.